We begin with the raw amino-acid sequence, 560 residues long: Chaperonin GroEL 2 (560 aa).

ATP is bound by residues 29–32, 86–90, Gly-413, 478–480, and Asp-494; these read TLGP, DGTTT, and NAA.

Belongs to the chaperonin (HSP60) family. In terms of assembly, forms a cylinder of 14 subunits composed of two heptameric rings stacked back-to-back. Interacts with the co-chaperonin GroES.

The protein resides in the cytoplasm. The enzyme catalyses ATP + H2O + a folded polypeptide = ADP + phosphate + an unfolded polypeptide.. In terms of biological role, together with its co-chaperonin GroES, plays an essential role in assisting protein folding. The GroEL-GroES system forms a nano-cage that allows encapsulation of the non-native substrate proteins and provides a physical environment optimized to promote and accelerate protein folding. This Nostoc sp. (strain PCC 7120 / SAG 25.82 / UTEX 2576) protein is Chaperonin GroEL 2.